The primary structure comprises 407 residues: MPGHLQEGFGCVVTNRFDQLFDDESDPFEVLKAAENKKKEAGGGGVGGPGAKSAAQAAAQTNSNAAGKQLRKESQKDRKNPLPPSVGVADKKEETQPPVALKKEGIRRVGRRPDQQLQGDGKLIDRRAERRPPRERRFEKPLEEKGEGGEFSVDRPIIERPIRGRGGLGRGRGGRGRGMGRGDGFDSRGKREFDRHSGSDRSSFSHYSGLKHEDKRGGSGSHNWGTVKDELTESPKYIQKQISYNCSDLDQSNVTEETPEGEEHPVADTENKENEVEEVKEEGPKEMTLDEWKAIQNKDRAKVEFNIRKPNEGADGQWKKGFVLHKSKSEEAHAEDSVMDHHFRKPANDITSQLEINFGDLGRPGRGGRGGRGGRGRGGRPNRGSRTDKSSASAPDVDDPEAFPALA.

The residue at position 25 (Ser-25) is a Phosphoserine. The interval 33 to 227 (AAENKKKEAG…GSGSHNWGTV (195 aa)) is disordered. A compositionally biased stretch (low complexity) spans 51 to 68 (AKSAAQAAAQTNSNAAGK). Lys-52 carries the post-translational modification N6-acetyllysine; alternate. Residue Lys-52 forms a Glycyl lysine isopeptide (Lys-Gly) (interchain with G-Cter in SUMO1); alternate linkage. An N6-acetyllysine modification is found at Lys-68. 3 stretches are compositionally biased toward basic and acidic residues: residues 70-80 (LRKESQKDRKN), 89-114 (ADKK…RRPD), and 122-162 (KLID…ERPI). A Glycyl lysine isopeptide (Lys-Gly) (interchain with G-Cter in SUMO2) cross-link involves residue Lys-102. Lys-122 and Lys-140 each carry N6-acetyllysine. The span at 164 to 182 (GRGGLGRGRGGRGRGMGRG) shows a compositional bias: gly residues. 2 positions are modified to omega-N-methylarginine: Arg-165 and Arg-188. Over residues 183 to 199 (DGFDSRGKREFDRHSGS) the composition is skewed to basic and acidic residues. A phosphoserine mark is found at Ser-197, Ser-199, Ser-203, Ser-205, and Ser-208. An N6-acetyllysine; alternate modification is found at Lys-211. Lys-211 is covalently cross-linked (Glycyl lysine isopeptide (Lys-Gly) (interchain with G-Cter in SUMO2); alternate). Omega-N-methylarginine is present on Arg-216. The residue at position 221 (Ser-221) is a Phosphoserine. Thr-226 is subject to Phosphothreonine. Lys-228 participates in a covalent cross-link: Glycyl lysine isopeptide (Lys-Gly) (interchain with G-Cter in SUMO1); alternate. Lys-228 participates in a covalent cross-link: Glycyl lysine isopeptide (Lys-Gly) (interchain with G-Cter in SUMO2); alternate. Phosphoserine is present on residues Leu-231, Ser-234, and Tyr-237. Phosphothreonine is present on Ser-234. Residue Lys-240 is modified to Phosphothreonine. Over residues 242–256 (ISYNCSDLDQSNVTE) the composition is skewed to polar residues. Disordered regions lie at residues 242 to 288 (ISYN…KEMT) and 327 to 407 (SKSE…PALA). The segment covering 261–274 (GEEHPVADTENKEN) has biased composition (basic and acidic residues). Lys-280 is covalently cross-linked (Glycyl lysine isopeptide (Lys-Gly) (interchain with G-Cter in SUMO2)). The segment covering 327 to 341 (SKSEEAHAEDSVMDH) has biased composition (basic and acidic residues). N6-acetyllysine is present on Lys-328. The residue at position 329 (Ser-329) is a Phosphoserine. Residues 362–371 (GRPGRGGRGG) show a composition bias toward gly residues. Residues Arg-363, Arg-366, and Arg-369 each carry the omega-N-methylarginine modification. Phosphoserine occurs at positions 391 and 393.

It belongs to the SERBP1-HABP4 family. In terms of assembly, associates with mature 80S ribosomes. Interacts with EEF2/eEF2; interaction sequesters EEF2/eEF2 at the A-site of the ribosome, thereby blocking the interaction sites of the mRNA-tRNA complex, promoting ribosome stabilization and hibernation. Interacts with SPIN1. Interacts with CHD3 and TDRD3. Interacts with ZDHHC17 (via ANK repeats). Post-translationally, phosphorylation by MTOR inhibits SERBP1 and relieves ribosome hibernation.

Its subcellular location is the cytoplasm. It is found in the nucleus. It localises to the perinuclear region. Its function is as follows. Ribosome-binding protein that promotes ribosome hibernation, a process during which ribosomes are stabilized in an inactive state and preserved from proteasomal degradation. Acts via its association with EEF2/eEF2 factor, sequestering EEF2/eEF2 at the A-site of the ribosome and promoting ribosome stabilization and storage in an inactive state. May also play a role in the regulation of mRNA stability: binds to the 3'-most 134 nt of the SERPINE1/PAI1 mRNA, a region which confers cyclic nucleotide regulation of message decay. Seems to play a role in PML-nuclear bodies formation. In Mus musculus (Mouse), this protein is SERPINE1 mRNA-binding protein 1.